The sequence spans 108 residues: Large ribosomal subunit protein uL22 (108 aa).

Belongs to the universal ribosomal protein uL22 family. Part of the 50S ribosomal subunit.

Its function is as follows. This protein binds specifically to 23S rRNA; its binding is stimulated by other ribosomal proteins, e.g. L4, L17, and L20. It is important during the early stages of 50S assembly. It makes multiple contacts with different domains of the 23S rRNA in the assembled 50S subunit and ribosome. The globular domain of the protein is located near the polypeptide exit tunnel on the outside of the subunit, while an extended beta-hairpin is found that lines the wall of the exit tunnel in the center of the 70S ribosome. The sequence is that of Large ribosomal subunit protein uL22 from Desulfatibacillum aliphaticivorans.